The primary structure comprises 37 residues: Mu-agatoxin-Aa1e (37 aa).

4 disulfide bridges follow: C2-C18, C9-C23, C17-C33, and C25-C31. An Asparagine amide modification is found at N37.

This sequence belongs to the neurotoxin 07 (Beta/delta-agtx) family. 03 (aga-4) subfamily. Aga sub-subfamily. In terms of tissue distribution, expressed by the venom gland.

The protein resides in the secreted. In terms of biological role, insecticidal neurotoxin that induces an irreversible spastic paralysis when injected into insects. Modifies presynaptic voltage-gated sodium channels (Nav), causing them to open at the normal resting potential of the nerve. This leads to spontaneous release of neurotransmitter and repetitive action potentials in motor neurons. This is Mu-agatoxin-Aa1e from Agelenopsis aperta (North American funnel-web spider).